The following is a 216-amino-acid chain: Twisted gastrulation protein homolog 1-A (216 aa).

A signal peptide spans 1 to 25; the sequence is MKPSFLHIPAAALLLCSLWILPIYC. N-linked (GlcNAc...) asparagine glycosylation is found at asparagine 52, asparagine 81, and asparagine 145.

The protein belongs to the twisted gastrulation protein family. As to quaternary structure, binds directly to bmp2, bmp4 and bmp7 and can form a ternary complex with bmps and chordin, thus preventing the binding of bmps to their cell surface receptors. In terms of tissue distribution, posterior defects are induced by overexpression. This may arise through alteration of bmp4 or chrd function in the developing tailbud region.

The protein resides in the secreted. Functionally, involved in dorsal-ventral patterning, permitting peak BMP signaling by antagonizing the residual anti-BMP activity of the cleavage products of chrd. Functions to promote the formation of ventral mesoderm by increasing the activity of bmp7 and other BMPS. Seems to antagonize BMP signaling by forming ternary complexes with chrd and BMPs, thereby preventing BMPs from binding to their receptors. In addition to the anti-BMP function, also has pro-BMP activity, partly mediated by cleavage and degradation of chrd, which releases BMPs from ternary complexes. May be an important modulator of BMP-regulated cartilage development and chondrocyte differentiation. This is Twisted gastrulation protein homolog 1-A (twsg1-a) from Xenopus laevis (African clawed frog).